Consider the following 384-residue polypeptide: Flap endonuclease 1 (384 aa).

The segment at 1 to 105 is N-domain; it reads MGIKGLTKLL…GELAKRKDKR (105 aa). Asp34 is a binding site for Mg(2+). Arg71 is a DNA binding site. Residues Asp87, Glu159, Glu161, Asp180, and Asp182 each contribute to the Mg(2+) site. The I-domain stretch occupies residues 123-254; the sequence is EIEKLSKRTV…VNALKYIKQY (132 aa). Residue Glu159 coordinates DNA. The DNA site is built by Gly232 and Asp234. Asp234 is a binding site for Mg(2+). Residues 337 to 345 form an interaction with PCNA region; sequence GQNRLETFF. A disordered region spans residues 353–384; the sequence is STVGKRKEPEKGKGKFGAAGGKKSKGVTKRKF. Positions 374-384 are enriched in basic residues; the sequence is KKSKGVTKRKF.

It belongs to the XPG/RAD2 endonuclease family. FEN1 subfamily. As to quaternary structure, interacts with PCNA. Three molecules of FEN1 bind to one PCNA trimer with each molecule binding to one PCNA monomer. PCNA stimulates the nuclease activity without altering cleavage specificity. Mg(2+) is required as a cofactor. In terms of processing, phosphorylated. Phosphorylation upon DNA damage induces relocalization to the nuclear plasma.

The protein resides in the nucleus. It localises to the nucleolus. Its subcellular location is the nucleoplasm. The protein localises to the mitochondrion. Its function is as follows. Structure-specific nuclease with 5'-flap endonuclease and 5'-3' exonuclease activities involved in DNA replication and repair. During DNA replication, cleaves the 5'-overhanging flap structure that is generated by displacement synthesis when DNA polymerase encounters the 5'-end of a downstream Okazaki fragment. It enters the flap from the 5'-end and then tracks to cleave the flap base, leaving a nick for ligation. Also involved in the long patch base excision repair (LP-BER) pathway, by cleaving within the apurinic/apyrimidinic (AP) site-terminated flap. Acts as a genome stabilization factor that prevents flaps from equilibrating into structures that lead to duplications and deletions. Also possesses 5'-3' exonuclease activity on nicked or gapped double-stranded DNA, and exhibits RNase H activity. Also involved in replication and repair of rDNA and in repairing mitochondrial DNA. The polypeptide is Flap endonuclease 1 (Micromonas commoda (strain RCC299 / NOUM17 / CCMP2709) (Picoplanktonic green alga)).